Reading from the N-terminus, the 241-residue chain is HTH-type quorum-sensing regulator RhlR (241 aa).

The HTH luxR-type domain maps to 174–239; that stretch reads LMSNPVCLSH…LAAAYAAALG (66 aa). Residues 198–217 constitute a DNA-binding region (H-T-H motif); the sequence is SGEIAIILSISESTVNFHHK.

Belongs to the autoinducer-regulated transcriptional regulatory protein family. As to quaternary structure, homodimer in the absence of any acyl-L-homoserine lactone. The presence of the autoinducer C4-HSL has no significant effect on dimerization whereas N-(3-oxododecanoyl)-L-homoserine lactone (3O-C12-HSL), the LasR inducer, is able to dissociate the RhlR homodimers into monomers.

The protein resides in the cytoplasm. Activated by interaction with the autoinducer signal molecule N-butanoyl-L-homoserine lactone (C4-HSL or BHL), the product of the RhlI synthase. Is also activated by binding to rosmarinic acid (RA), a homoserine lactone mimic produced by plants, which induces a broad quorum sensing response, including the induction of all major quorum sensing controlled virulence factors. Rosmarinic acid secretion may be a plant defense mechanism to stimulate a premature quorum sensing response. Quorum-sensing regulator that controls the expression of multiple virulence factors in response to extracellular signaling molecules called autoinducers. Involved, among others, in the transcriptional regulation of genes that are responsible for rhamnolipid surfactant biosynthesis. Acts by binding to a specific sequence in the rhlAB regulatory region, both in the presence and in the absence of its autoinducer. In the former case it activates transcription of the promoter, whereas in the latter it acts as a transcriptional repressor. Also regulates the expression of the rmlBDAC operon, encoding dTDP-L-rhamnose biosynthetic enzymes, by binding to the rml box in the promoter region. In addition, is involved in the regulation of the production of elastase (lasB) and pyocyanine. The sequence is that of HTH-type quorum-sensing regulator RhlR from Pseudomonas aeruginosa (strain ATCC 15692 / DSM 22644 / CIP 104116 / JCM 14847 / LMG 12228 / 1C / PRS 101 / PAO1).